A 362-amino-acid polypeptide reads, in one-letter code: Chorismate synthase (362 aa).

An NADP(+)-binding site is contributed by R46. FMN is bound by residues 121 to 123 (RAS), 237 to 238 (NA), G277, 292 to 296 (KPTPS), and R318.

It belongs to the chorismate synthase family. In terms of assembly, homotetramer. The cofactor is FMNH2.

The enzyme catalyses 5-O-(1-carboxyvinyl)-3-phosphoshikimate = chorismate + phosphate. It functions in the pathway metabolic intermediate biosynthesis; chorismate biosynthesis; chorismate from D-erythrose 4-phosphate and phosphoenolpyruvate: step 7/7. Functionally, catalyzes the anti-1,4-elimination of the C-3 phosphate and the C-6 proR hydrogen from 5-enolpyruvylshikimate-3-phosphate (EPSP) to yield chorismate, which is the branch point compound that serves as the starting substrate for the three terminal pathways of aromatic amino acid biosynthesis. This reaction introduces a second double bond into the aromatic ring system. The sequence is that of Chorismate synthase from Campylobacter lari (strain RM2100 / D67 / ATCC BAA-1060).